We begin with the raw amino-acid sequence, 698 residues long: MRRFLLLYATQQGQAKAIAEEICEQAVVHGFSADLHCISESDKYDLKTETAPLVVVVSTTGTGDPPDTARKFVKEIQNQTLPVDFFAHLRYGLLGLGDSEYTYFCNGGKIIDKRLQELGARHFYDTGHADDCVGLELVVEPWIAGLWPALRKHFRSSRGQEEISGALPVASPASSRTDLVKSELLHIESQVELLRFDDSGRKDSEVLKQNAVNSNQSNVVIEDFESSLTRSVPPLSQASLNIPGLPPEYLQVHLQESLGQEESQVSVTSADPVFQVPISKAVQLTTNDAIKTTLLVELDISNTDFSYQPGDAFSVICPNSDSEVQSLLQRLQLEDKREHCVLLKIKADTKKKGATLPQHIPAGCSLQFIFTWCLEIRAIPKKAFLRALVDYTSDSAEKRRLQELCSKQGAADYSRFVRDACACLLDLLLAFPSCQPPLSLLLEHLPKLQPRPYSCASSSLFHPGKLHFVFNIVEFLSTATTEVLRKGVCTGWLALLVASVLQPNIHASHEDSGKALAPKISISPRTTNSFHLPDDPSIPIIMVGPGTGIAPFIGFLQHREKLQEQHPDGNFGAMWLFFGCRHKDRDYLFRKELRHFLKHGILTHLKVSFSRDAPVGEEEAPAKYVQDNIQLHGQQVARILLQENGHIYVCGDAKNMAKDVHDALVQIISKEVGVEKLEAMKTLATLKEEKRYLQDIWS.

The 143-residue stretch at 5–147 folds into the Flavodoxin-like domain; it reads LLLYATQQGQ…VVEPWIAGLW (143 aa). 93–124 contacts FMN; sequence LLGLGDSEYTYFCNGGKIIDKRLQELGARHFY. The hinge stretch occupies residues 166–247; the sequence is ALPVASPASS…ASLNIPGLPP (82 aa). Ser-171 and Ser-189 each carry phosphoserine. The region spanning 271–533 is the FAD-binding FR-type domain; it reads DPVFQVPISK…PRTTNSFHLP (263 aa). Lys-291 contributes to the NADP(+) binding site. FAD is bound by residues 451 to 454 and 487 to 490; these read RPYS and GVCT. NADP(+)-binding positions include 610-611, 624-626, and Asp-659; these read SR and YVQ. Position 697 (Trp-697) interacts with FAD.

Forms a multiprotein complex with MMACHC, MMADHC and MTR. FAD is required as a cofactor. The cofactor is FMN. Found in all tissues tested, particularly abundant in skeletal muscle.

It is found in the cytoplasm. The catalysed reaction is 2 methylcob(III)alamin-[methionine synthase] + 2 S-adenosyl-L-homocysteine + NADP(+) + H(+) = 2 cob(II)alamin-[methionine synthase] + 2 S-adenosyl-L-methionine + NADPH. It catalyses the reaction 2 cob(II)alamin + A + 2 H2O + 2 H(+) = 2 aquacob(III)alamin + AH2. In terms of biological role, key enzyme in methionine and folate homeostasis responsible for the reactivation of methionine synthase (MTR/MS) activity by catalyzing the reductive methylation of MTR-bound cob(II)alamin. Cobalamin (vitamin B12) forms a complex with MTR to serve as an intermediary in methyl transfer reactions that cycles between MTR-bound methylcob(III)alamin and MTR bound-cob(I)alamin forms, and occasional oxidative escape of the cob(I)alamin intermediate during the catalytic cycle leads to the inactive cob(II)alamin species. The processing of cobalamin in the cytosol occurs in a multiprotein complex composed of at least MMACHC, MMADHC, MTRR and MTR which may contribute to shuttle safely and efficiently cobalamin towards MTR in order to produce methionine. Also necessary for the utilization of methyl groups from the folate cycle, thereby affecting transgenerational epigenetic inheritance. Also acts as a molecular chaperone for methionine synthase by stabilizing apoMTR and incorporating methylcob(III)alamin into apoMTR to form the holoenzyme. Also serves as an aquacob(III)alamin reductase by reducing aquacob(III)alamin to cob(II)alamin; this reduction leads to stimulation of the conversion of apoMTR and aquacob(III)alamin to MTR holoenzyme. In Homo sapiens (Human), this protein is Methionine synthase reductase.